The chain runs to 215 residues: Oligoribonuclease (215 aa).

One can recognise an Exonuclease domain in the interval 5–170 (LVWIDCEMTG…ADIHESIREL (166 aa)). Tyr-127 is a catalytic residue. Residues 196-215 (LDEGKDAPGPSDSASAPPTG) are disordered. A compositionally biased stretch (low complexity) spans 202–215 (APGPSDSASAPPTG).

It belongs to the oligoribonuclease family.

Its subcellular location is the cytoplasm. Functionally, 3'-to-5' exoribonuclease specific for small oligoribonucleotides. The sequence is that of Oligoribonuclease from Mycolicibacterium paratuberculosis (strain ATCC BAA-968 / K-10) (Mycobacterium paratuberculosis).